Reading from the N-terminus, the 154-residue chain is MAPAKADPSKKSDPKAQAAKVAKAVKSGSTLKKKSQKIRTKVTFHRPKTLKKDRNPKYPRISAPGRNKLDQYGILKYPLTTESAMKKIEDNNTLVFIVDIKADKKKIKDAVKKMYDIQTKKVNTLIRPDGTKKAYVRLTPDYDALDVANKIGII.

The interval 1-39 is disordered; sequence MAPAKADPSKKSDPKAQAAKVAKAVKSGSTLKKKSQKIR. A compositionally biased stretch (low complexity) spans 15 to 26; it reads KAQAAKVAKAVK.

Belongs to the universal ribosomal protein uL23 family.

Its function is as follows. This protein binds to a specific region on the 26S rRNA. This Nicotiana tabacum (Common tobacco) protein is Large ribosomal subunit protein uL23 (RPL23A).